The sequence spans 239 residues: Mediator of RNA polymerase II transcription subunit 7 (239 aa).

Disordered stretches follow at residues 1–21 (MSSLPQEAALPITNTLFPPPP) and 43–66 (LFVNDEKGKTKGKEKKSDDRDMSV). Residues 46-66 (NDEKGKTKGKEKKSDDRDMSV) are compositionally biased toward basic and acidic residues.

This sequence belongs to the Mediator complex subunit 7 family. As to quaternary structure, component of the Mediator complex.

It is found in the nucleus. Its function is as follows. Component of the Mediator complex, a coactivator involved in the regulated transcription of nearly all RNA polymerase II-dependent genes. Mediator functions as a bridge to convey information from gene-specific regulatory proteins to the basal RNA polymerase II transcription machinery. Mediator is recruited to promoters by direct interactions with regulatory proteins and serves as a scaffold for the assembly of a functional preinitiation complex with RNA polymerase II and the general transcription factors. The sequence is that of Mediator of RNA polymerase II transcription subunit 7 (MED7) from Cryptococcus neoformans var. neoformans serotype D (strain B-3501A) (Filobasidiella neoformans).